A 72-amino-acid chain; its full sequence is Large ribosomal subunit protein bL31c (72 aa).

It belongs to the bacterial ribosomal protein bL31 family. Type A subfamily. Part of the 50S ribosomal subunit.

It localises to the plastid. The protein resides in the chloroplast. In terms of biological role, binds the 23S rRNA. The sequence is that of Large ribosomal subunit protein bL31c (rpl31) from Phaeodactylum tricornutum (strain CCAP 1055/1).